A 400-amino-acid chain; its full sequence is AA13 family lytic polysaccharide monooxygenase A (400 aa).

The N-terminal stretch at 1 to 17 is a signal peptide; the sequence is MLLTVLAVVGCFTAVNG. His-18 is a binding site for Cu(2+). His-18 bears the Methylhistidine mark. One can recognise a Chitin-binding type-4 domain in the interval 18 to 247; that stretch reads HGYLTIPASR…AQVYLHCADI (230 aa). Intrachain disulfides connect Cys-39-Cys-42, Cys-65-Cys-244, Cys-101-Cys-202, Cys-117-Cys-144, Cys-152-Cys-160, Cys-166-Cys-172, and Cys-180-Cys-191. Cu(2+) is bound at residue His-108. Asn-119 carries an N-linked (GlcNAc...) asparagine glycan. Tyr-241 contributes to the Cu(2+) binding site. The disordered stretch occupies residues 254–287; that stretch reads GGTTSKSTTSTTSTTSTSRSTSTSAPTTTSSAST. Positions 257–287 are enriched in low complexity; that stretch reads TSKSTTSTTSTTSTSRSTSTSAPTTTSSAST. One can recognise a CBM20 domain in the interval 293–400; it reads TTQASLIPVT…TTATAAASWR (108 aa). Asn-379 carries an N-linked (GlcNAc...) asparagine glycan.

This sequence belongs to the polysaccharide monooxygenase AA13 family. Requires Cu(2+) as cofactor. Post-translationally, O-mannosylated.

It localises to the secreted. The catalysed reaction is starch + reduced acceptor + O2 = D-glucono-1,5-lactone-terminated malto-oligosaccharides + short-chain malto-oligosaccharides + acceptor + H2O.. With respect to regulation, activity is inhibited by both beta-cyclodextrin or amylose that block the access to the active site. Its function is as follows. Starch-active lytic polysaccharide monooxygenase that oxidizes the C1 position of starch substrates. Catalysis by LPMOs requires the reduction of the active-site copper from Cu(II) to Cu(I) by a reducing agent and H(2)O(2) or O(2) as a cosubstrate. The protein is AA13 family lytic polysaccharide monooxygenase A of Aspergillus terreus (strain NIH 2624 / FGSC A1156).